Consider the following 650-residue polypeptide: Chaperone protein DnaK (650 aa).

A Phosphothreonine; by autocatalysis modification is found at Thr200.

The protein belongs to the heat shock protein 70 family.

Its function is as follows. Acts as a chaperone. The polypeptide is Chaperone protein DnaK (Burkholderia orbicola (strain MC0-3)).